The sequence spans 122 residues: Large ribosomal subunit protein uL14c (122 aa).

This sequence belongs to the universal ribosomal protein uL14 family. As to quaternary structure, part of the 50S ribosomal subunit.

It localises to the plastid. Its subcellular location is the chloroplast. Its function is as follows. Binds to 23S rRNA. In Coffea arabica (Arabian coffee), this protein is Large ribosomal subunit protein uL14c.